We begin with the raw amino-acid sequence, 149 residues long: Transcription factor HY5-like (149 aa).

The segment at 1–77 is disordered; the sequence is MSLQRPNGNS…RRRGRNPVDK (77 aa). The segment at 23-36 is interaction with COP1; that stretch reads ESDEELLMVPDMEA. Serine 24 is subject to Phosphoserine. Residues 55-64 are compositionally biased toward polar residues; sequence ELDQTQNGVS. A bZIP domain is found at 78–141; it reads EYRSLKRLLR…TMLRKMLINT (64 aa). The tract at residues 80–100 is basic motif; that stretch reads RSLKRLLRNRVSAQQARERKK. Positions 106–134 are leucine-zipper; that stretch reads LESRANELQNNNDQLEEKISTLTNENTML.

Belongs to the bZIP family. As to quaternary structure, heterodimer; heterodimerizes with HY5 via the leucine-zipper domains. Interacts with COP1 WD40 domain. Interacts with BBX24/STO and BBX25/STH. Post-translationally, ubiquitinated by COP1. Ubiquitination takes place in darkness and leads to its subsequent degradation, thereby preventing the activation of photomorphogenesis signals.

The protein localises to the nucleus. Transcription factor that promotes photomorphogenesis in light. Acts downstream of the light receptor network and directly affects transcription of light-induced genes. Specifically involved in the blue light specific pathway, suggesting that it participates in transmission of cryptochromes (CRY1 and CRY2) signals to downstream responses. In darkness, its degradation prevents the activation of light-induced genes. This Arabidopsis thaliana (Mouse-ear cress) protein is Transcription factor HY5-like (HYH).